Here is a 344-residue protein sequence, read N- to C-terminus: Nuclear distribution protein nudE-like 1-B (344 aa).

Residues 26–189 (YKKSCHDAQE…ELAVRERTSD (164 aa)) are a coiled coil.

Belongs to the nudE family. Post-translationally, phosphorylated in mitosis.

Its subcellular location is the cytoplasm. The protein resides in the cytoskeleton. The protein localises to the microtubule organizing center. It is found in the centrosome. It localises to the spindle. In terms of biological role, required for organization of the cellular microtubule array and microtubule anchoring at the centrosome. Positively regulates the activity of the minus-end directed microtubule motor protein dynein. May enhance dynein-mediated microtubule sliding by targeting dynein to the microtubule plus end. In Danio rerio (Zebrafish), this protein is Nuclear distribution protein nudE-like 1-B (ndel1b).